The chain runs to 343 residues: DNA-directed RNA polymerase subunit alpha (343 aa).

Residues 1-236 are alpha N-terminal domain (alpha-NTD); it reads MQEHYYKFWR…EQLQIFLTFD (236 aa). Positions 253–343 are alpha C-terminal domain (alpha-CTD); sequence LNENLFRSVD…QPPQKRETQQ (91 aa).

The protein belongs to the RNA polymerase alpha chain family. As to quaternary structure, homodimer. The RNAP catalytic core consists of 2 alpha, 1 beta, 1 beta' and 1 omega subunit. When a sigma factor is associated with the core the holoenzyme is formed, which can initiate transcription.

The catalysed reaction is RNA(n) + a ribonucleoside 5'-triphosphate = RNA(n+1) + diphosphate. Functionally, DNA-dependent RNA polymerase catalyzes the transcription of DNA into RNA using the four ribonucleoside triphosphates as substrates. This chain is DNA-directed RNA polymerase subunit alpha, found in Bdellovibrio bacteriovorus (strain ATCC 15356 / DSM 50701 / NCIMB 9529 / HD100).